Consider the following 1035-residue polypeptide: Ephrin type-A receptor 6 (1035 aa).

An N-terminal signal peptide occupies residues 1–22; the sequence is MGGCEVREFLLQFGFFLPLLTA. At 23 to 549 the chain is on the extracellular side; it reads WTGDCSHVSN…MAAEQGQILV (527 aa). The Eph LBD domain maps to 33-211; the sequence is QVVLLDTTTV…FYKKCPFTVR (179 aa). Fibronectin type-III domains lie at 330-440 and 441-536; these read PPSA…TDHD and APSL…TGDE. 3 N-linked (GlcNAc...) asparagine glycosylation sites follow: Asn342, Asn396, and Asn409. Residues 550-570 traverse the membrane as a helical segment; the sequence is IATAAVGGFTLLVILTLFFLI. Residues 571 to 1035 lie on the Cytoplasmic side of the membrane; it reads TGRCQWYIKA…MHIQEKGFHV (465 aa). 2 positions are modified to phosphotyrosine; by autocatalysis: Tyr605 and Tyr611. The Protein kinase domain maps to 630 to 943; the sequence is IRIERVIGAG…RNPSALHTLV (314 aa). Residues 636-644 and Lys662 contribute to the ATP site; that span reads IGAGEFGEV. The Proton acceptor role is filled by Asp797. Tyr830 and Tyr977 each carry phosphotyrosine; by autocatalysis. The SAM domain occupies 960-1024; that stretch reads PLFVTVGDWL…VSSIQTLRLH (65 aa). The PDZ-binding signature appears at 1033–1035; the sequence is FHV.

The protein belongs to the protein kinase superfamily. Tyr protein kinase family. Ephrin receptor subfamily. In terms of assembly, heterotetramer upon binding of the ligand. The heterotetramer is composed of an ephrin dimer and a receptor dimer. Oligomerization is probably required to induce biological responses. Interacts (via SAM domain) with ANKS1A (via SAM domain).

The protein resides in the membrane. The enzyme catalyses L-tyrosyl-[protein] + ATP = O-phospho-L-tyrosyl-[protein] + ADP + H(+). In terms of biological role, receptor tyrosine kinase which binds promiscuously GPI-anchored ephrin-A family ligands residing on adjacent cells, leading to contact-dependent bidirectional signaling into neighboring cells. The signaling pathway downstream of the receptor is referred to as forward signaling while the signaling pathway downstream of the ephrin ligand is referred to as reverse signaling. This chain is Ephrin type-A receptor 6 (Epha6), found in Mus musculus (Mouse).